An 84-amino-acid polypeptide reads, in one-letter code: Keratin-associated protein 19-4 (84 aa).

It belongs to the KRTAP type 19 family. As to quaternary structure, interacts with hair keratins.

Its function is as follows. In the hair cortex, hair keratin intermediate filaments are embedded in an interfilamentous matrix, consisting of hair keratin-associated proteins (KRTAP), which are essential for the formation of a rigid and resistant hair shaft through their extensive disulfide bond cross-linking with abundant cysteine residues of hair keratins. The matrix proteins include the high-sulfur and high-glycine-tyrosine keratins. The chain is Keratin-associated protein 19-4 (KRTAP19-4) from Homo sapiens (Human).